Reading from the N-terminus, the 453-residue chain is tRNA modification GTPase MnmE (453 aa).

Residues Arg-22, Glu-79, and Lys-119 each coordinate (6S)-5-formyl-5,6,7,8-tetrahydrofolate. In terms of domain architecture, TrmE-type G spans 215-376; the sequence is GMKVVIAGRP…LKQHLKSLMG (162 aa). K(+) is bound at residue Asn-225. GTP is bound by residues 225–230, 244–250, 269–272, and 334–337; these read NAGKSS, TEIAGTT, DTAG, and NKAD. Residue Ser-229 participates in Mg(2+) binding. Residues Thr-244, Ile-246, and Thr-249 each contribute to the K(+) site. Mg(2+) is bound at residue Thr-250. Lys-453 contacts (6S)-5-formyl-5,6,7,8-tetrahydrofolate.

The protein belongs to the TRAFAC class TrmE-Era-EngA-EngB-Septin-like GTPase superfamily. TrmE GTPase family. As to quaternary structure, homodimer. Heterotetramer of two MnmE and two MnmG subunits. Requires K(+) as cofactor.

It localises to the cytoplasm. Its function is as follows. Exhibits a very high intrinsic GTPase hydrolysis rate. Involved in the addition of a carboxymethylaminomethyl (cmnm) group at the wobble position (U34) of certain tRNAs, forming tRNA-cmnm(5)s(2)U34. This chain is tRNA modification GTPase MnmE, found in Shewanella sp. (strain MR-7).